A 429-amino-acid chain; its full sequence is Histidinol dehydrogenase (429 aa).

The NAD(+) site is built by tyrosine 127, glutamine 188, and asparagine 211. Substrate is bound by residues serine 234, glutamine 256, and histidine 259. Residues glutamine 256 and histidine 259 each coordinate Zn(2+). Active-site proton acceptor residues include glutamate 324 and histidine 325. Residues histidine 325, aspartate 358, glutamate 412, and histidine 417 each contribute to the substrate site. Aspartate 358 contacts Zn(2+). Histidine 417 contacts Zn(2+).

It belongs to the histidinol dehydrogenase family. It depends on Zn(2+) as a cofactor.

It catalyses the reaction L-histidinol + 2 NAD(+) + H2O = L-histidine + 2 NADH + 3 H(+). Its pathway is amino-acid biosynthesis; L-histidine biosynthesis; L-histidine from 5-phospho-alpha-D-ribose 1-diphosphate: step 9/9. In terms of biological role, catalyzes the sequential NAD-dependent oxidations of L-histidinol to L-histidinaldehyde and then to L-histidine. The protein is Histidinol dehydrogenase of Bacillus thuringiensis subsp. konkukian (strain 97-27).